We begin with the raw amino-acid sequence, 439 residues long: Methylenetetrahydrofolate--tRNA-(uracil-5-)-methyltransferase TrmFO (439 aa).

9–14 (GAGLAG) is an FAD binding site.

The protein belongs to the MnmG family. TrmFO subfamily. FAD is required as a cofactor.

The protein resides in the cytoplasm. The enzyme catalyses uridine(54) in tRNA + (6R)-5,10-methylene-5,6,7,8-tetrahydrofolate + NADH + H(+) = 5-methyluridine(54) in tRNA + (6S)-5,6,7,8-tetrahydrofolate + NAD(+). It carries out the reaction uridine(54) in tRNA + (6R)-5,10-methylene-5,6,7,8-tetrahydrofolate + NADPH + H(+) = 5-methyluridine(54) in tRNA + (6S)-5,6,7,8-tetrahydrofolate + NADP(+). Its function is as follows. Catalyzes the folate-dependent formation of 5-methyl-uridine at position 54 (M-5-U54) in all tRNAs. This chain is Methylenetetrahydrofolate--tRNA-(uracil-5-)-methyltransferase TrmFO, found in Desulforudis audaxviator (strain MP104C).